We begin with the raw amino-acid sequence, 165 residues long: 2-halobenzoate 1,2-dioxygenase small subunit (165 aa).

It belongs to the bacterial ring-hydroxylating dioxygenase beta subunit family. Heterohexamer of 3 large (CbdA) subunits and 3 small (CbdB) subunits. The heterohexamer is part of 2-halobenzoate dioxygenase two component enzyme system. The other component is a NADH:acceptor reductase (CdbC).

The enzyme catalyses a 2-halobenzoate + NADH + O2 + H(+) = a halide anion + catechol + CO2 + NAD(+). It functions in the pathway xenobiotic degradation; benzoate degradation via CoA ligation. Component of 2-halobenzoate dioxygenase multicomponent enzyme system which catalyzes the incorporation of both atoms of molecular oxygen into 2-halobenzoate to form catechol. The chain is 2-halobenzoate 1,2-dioxygenase small subunit (cbdB) from Burkholderia cepacia (Pseudomonas cepacia).